We begin with the raw amino-acid sequence, 247 residues long: Triosephosphate isomerase (247 aa).

8–10 (NWK) provides a ligand contact to substrate. His95 (electrophile) is an active-site residue. Glu162 functions as the Proton acceptor in the catalytic mechanism. Substrate contacts are provided by Gly168 and Ser207.

This sequence belongs to the triosephosphate isomerase family. Homodimer.

The protein localises to the cytoplasm. The enzyme catalyses D-glyceraldehyde 3-phosphate = dihydroxyacetone phosphate. It functions in the pathway carbohydrate biosynthesis; gluconeogenesis. Its pathway is carbohydrate degradation; glycolysis; D-glyceraldehyde 3-phosphate from glycerone phosphate: step 1/1. Its function is as follows. Involved in the gluconeogenesis. Catalyzes stereospecifically the conversion of dihydroxyacetone phosphate (DHAP) to D-glyceraldehyde-3-phosphate (G3P). The chain is Triosephosphate isomerase from Gluconacetobacter diazotrophicus (strain ATCC 49037 / DSM 5601 / CCUG 37298 / CIP 103539 / LMG 7603 / PAl5).